We begin with the raw amino-acid sequence, 1791 residues long: Protein TIC 214 (1791 aa).

Transmembrane regions (helical) follow at residues 19–39, 68–88, 91–111, 133–153, 176–196, and 227–247; these read IINSVVVVGLYYGFLTTFSIG, FIAGQLMMFISIYYAPLHLAL, PHTITVLALPYLLFHFFWNNH, VFLNNLIFQLFNHFILPSSML, VGWLIGHILFMKWVGLVLVWI, and IFSILLFITCVYYLGRIPSPI. The interval 1492-1511 is disordered; the sequence is ASQVELESDKENKKNPESAL. The span at 1498-1511 shows a compositional bias: basic and acidic residues; the sequence is ESDKENKKNPESAL.

It belongs to the TIC214 family. Part of the Tic complex.

It is found in the plastid. The protein localises to the chloroplast inner membrane. In terms of biological role, involved in protein precursor import into chloroplasts. May be part of an intermediate translocation complex acting as a protein-conducting channel at the inner envelope. This chain is Protein TIC 214, found in Barbarea verna (Land cress).